The primary structure comprises 512 residues: MEEFPGYFELDRSRQHDFLYPLIFRESIYALAHDHGLNRNRSTLFENEVDYDKKYSLIIVKRLITRMYQRNHLIISANGSVQNPFWGHNQNLYSKILSEGFAVIVEIPFSLRVLSSFERKEKDIAKSPTLRSIHSIFPFLEDQFSHLDYLSHVLIPYPIHLEIAVQTLRYWVKDASSLHLLRIFLHEYWNSFSTPKKHITLFLKGNSRFFLFLYNSYVCEYESIFLFIRNQSSHFQSTSSGVFFERILFYVKIDHLVEVFVGTDFLDIRSFFKDPNMHYVRYQGKSILASKDTPLLMNKWKYYLVNLWQYHFSVWSQPGRININQLGKYSLDFLGYFSNVQLKSSVVRNQTLENSFLINNAMKKLETTVPILPLIGSLSRAKFCNALGHPISKPTRNDSSDSDIIDRFVRICRNLSHYHSGSSKKKSLYRIKYILRLSCVKTLARKHKSSVRAFLKRLGSELGDEFLTEEGVVLAVIFPKASGRLYRGRIWYLDIPCINDRVGDAEGSIFTK.

The protein belongs to the intron maturase 2 family. MatK subfamily.

It localises to the plastid. It is found in the chloroplast. Functionally, usually encoded in the trnK tRNA gene intron. Probably assists in splicing its own and other chloroplast group II introns. In Oenothera biennis (German evening primrose), this protein is Maturase K.